The following is a 1219-amino-acid chain: ATP-dependent helicase/nuclease subunit A (1219 aa).

A UvrD-like helicase ATP-binding domain is found at 12–477 (TRWTDNQWKS…IDLSQNFRSR (466 aa)). An ATP-binding site is contributed by 33 to 40 (AAAGSGKT). The UvrD-like helicase C-terminal domain maps to 478-786 (EEVLTTTNYL…RMMTIHSSKG (309 aa)). The interval 997–1016 (PSKQSVSELKRQHETEQSDT) is disordered. Residues 1004–1016 (ELKRQHETEQSDT) are compositionally biased toward basic and acidic residues.

It belongs to the helicase family. AddA subfamily. As to quaternary structure, heterodimer of AddA and AddB/RexB. Requires Mg(2+) as cofactor.

The catalysed reaction is Couples ATP hydrolysis with the unwinding of duplex DNA by translocating in the 3'-5' direction.. It carries out the reaction ATP + H2O = ADP + phosphate + H(+). Functionally, the heterodimer acts as both an ATP-dependent DNA helicase and an ATP-dependent, dual-direction single-stranded exonuclease. Recognizes the chi site generating a DNA molecule suitable for the initiation of homologous recombination. The AddA nuclease domain is required for chi fragment generation; this subunit has the helicase and 3' -&gt; 5' nuclease activities. This is ATP-dependent helicase/nuclease subunit A from Staphylococcus saprophyticus subsp. saprophyticus (strain ATCC 15305 / DSM 20229 / NCIMB 8711 / NCTC 7292 / S-41).